A 122-amino-acid chain; its full sequence is Small ribosomal subunit protein uS13 (122 aa).

The disordered stretch occupies residues G95 to K122.

The protein belongs to the universal ribosomal protein uS13 family. Part of the 30S ribosomal subunit. Forms a loose heterodimer with protein S19. Forms two bridges to the 50S subunit in the 70S ribosome.

Its function is as follows. Located at the top of the head of the 30S subunit, it contacts several helices of the 16S rRNA. In the 70S ribosome it contacts the 23S rRNA (bridge B1a) and protein L5 of the 50S subunit (bridge B1b), connecting the 2 subunits; these bridges are implicated in subunit movement. Contacts the tRNAs in the A and P-sites. This is Small ribosomal subunit protein uS13 from Thermoanaerobacter pseudethanolicus (strain ATCC 33223 / 39E) (Clostridium thermohydrosulfuricum).